Consider the following 95-residue polypeptide: Opiscorpine-4 (95 aa).

Residues 1–19 form the signal peptide; it reads MNNKLTALIFLGLLAIASC. A BetaSPN-type CS-alpha/beta domain is found at 55 to 95; the sequence is EFMCVANIDMTKSCDTHCQKASGEKGYCHGTKCKCGVPLSY. 3 cysteine pairs are disulfide-bonded: Cys-58-Cys-82, Cys-68-Cys-87, and Cys-72-Cys-89.

It belongs to the long chain scorpion toxin family. Class 3 subfamily. As to expression, expressed by the venom gland.

The protein localises to the secreted. Has antimicrobial activity against yeasts and bacteria. In Opistophthalmus carinatus (African yellow leg scorpion), this protein is Opiscorpine-4.